Here is an 804-residue protein sequence, read N- to C-terminus: E3 ubiquitin-protein ligase RNF10 (804 aa).

3 stretches are compositionally biased toward low complexity: residues 1–31 (MPQS…SGSS), 78–90 (SNQS…QKSK), and 104–113 (SKPFSSSSNG). The interval 1–134 (MPQSSPSAAA…AEFSPAQFSG (134 aa)) is disordered. Ser-5 bears the Phosphoserine mark. Ser-110 carries the post-translational modification Phosphoserine. A compositionally biased stretch (basic and acidic residues) spans 114 to 124 (GRRDEVAEAQR). At Ser-128 the chain carries Phosphoserine. An RING-type zinc finger spans residues 225–267 (CPICLYPPTAAKITRCGHIFCWACILHYLSLSEKTWSKCPICY). Disordered stretches follow at residues 589–611 (DIEK…ERRI), 646–665 (DSAL…LSPL), and 715–804 (KADG…VHTK). The span at 601–611 (AREERRRERRI) shows a compositional bias: basic and acidic residues. A compositionally biased stretch (polar residues) spans 646-655 (DSALGPTSTE). Residues 715-729 (KADGWPKTAPKKDDN) show a composition bias toward basic and acidic residues. Positions 795-804 (LFSTSVVHTK) are enriched in polar residues.

This sequence belongs to the RNF10 family. As to quaternary structure, interacts with MEOX2.

It is found in the cytoplasm. It localises to the nucleus. The enzyme catalyses S-ubiquitinyl-[E2 ubiquitin-conjugating enzyme]-L-cysteine + [acceptor protein]-L-lysine = [E2 ubiquitin-conjugating enzyme]-L-cysteine + N(6)-ubiquitinyl-[acceptor protein]-L-lysine.. The protein operates within protein modification; protein ubiquitination. Its function is as follows. E3 ubiquitin-protein ligase that catalyzes monoubiquitination of 40S ribosomal proteins RPS2/us5 and RPS3/us3 in response to ribosome stalling. Part of a ribosome quality control that takes place when ribosomes have stalled during translation initiation (iRQC): RNF10 acts by mediating monoubiquitination of RPS2/us5 and RPS3/us3, promoting their degradation by the proteasome. Also promotes ubiquitination of 40S ribosomal proteins in response to ribosome stalling during translation elongation. The action of RNF10 in iRQC is counteracted by USP10. May also act as a transcriptional factor involved in the regulation of MAG (Myelin-associated glycoprotein) expression. Acts as a regulator of Schwann cell differentiation and myelination. The chain is E3 ubiquitin-protein ligase RNF10 from Mus musculus (Mouse).